Reading from the N-terminus, the 749-residue chain is Cytosolic phospholipase A2 (749 aa).

Residues 1–124 form the C2 domain; the sequence is MASIDPYQHI…GEKKQVPFTF (124 aa). Positions 1–178 are phospholipid binding; that stretch reads MASIDPYQHI…LRKLLGPEKT (178 aa). The Ca(2+) site is built by aspartate 40, threonine 41, aspartate 43, asparagine 65, aspartate 93, alanine 94, and asparagine 95. One can recognise a PLA2c domain in the interval 138 to 740; that stretch reads VCSSTDLRFS…NDVEARKLLH (603 aa). Serine 229 (nucleophile) is an active-site residue. The disordered stretch occupies residues 417–458; it reads MEEEIENLKPKHILGNDSSDSDDEMQEPKGTENSKAEEEYQR. A compositionally biased stretch (basic and acidic residues) spans 442 to 457; it reads QEPKGTENSKAEEEYQ. The active-site Proton acceptor is the aspartate 549.

Its subcellular location is the cytoplasm. It is found in the cytoplasmic vesicle. It catalyses the reaction a 1,2-diacyl-sn-glycero-3-phosphocholine + H2O = a 1-acyl-sn-glycero-3-phosphocholine + a fatty acid + H(+). It carries out the reaction a 1-acyl-sn-glycero-3-phosphocholine + H2O = sn-glycerol 3-phosphocholine + a fatty acid + H(+). Its activity is regulated as follows. Stimulated by agonists such as ATP, EGF, thrombin and bradykinin as well as by cytosolic Ca(2+). Selectively hydrolyzes arachidonyl phospholipids in the sn-2 position releasing arachidonic acid. Together with its lysophospholipid activity, it is implicated in the initiation of the inflammatory response. The chain is Cytosolic phospholipase A2 (pla2g4a) from Xenopus tropicalis (Western clawed frog).